Reading from the N-terminus, the 458-residue chain is Phosphomethylpyrimidine synthase (458 aa).

Residues Asn-80, Met-109, Tyr-139, His-175, 195-197, 236-239, and Glu-275 contribute to the substrate site; these read SRG and DSLR. Zn(2+) is bound at residue His-279. Tyr-302 is a binding site for substrate. Residue His-343 participates in Zn(2+) binding. Residues Cys-423, Cys-426, and Cys-431 each contribute to the [4Fe-4S] cluster site.

It belongs to the ThiC family. [4Fe-4S] cluster serves as cofactor.

It catalyses the reaction 5-amino-1-(5-phospho-beta-D-ribosyl)imidazole + S-adenosyl-L-methionine = 4-amino-2-methyl-5-(phosphooxymethyl)pyrimidine + CO + 5'-deoxyadenosine + formate + L-methionine + 3 H(+). It functions in the pathway cofactor biosynthesis; thiamine diphosphate biosynthesis. Catalyzes the synthesis of the hydroxymethylpyrimidine phosphate (HMP-P) moiety of thiamine from aminoimidazole ribotide (AIR) in a radical S-adenosyl-L-methionine (SAM)-dependent reaction. The polypeptide is Phosphomethylpyrimidine synthase (Acaryochloris marina (strain MBIC 11017)).